We begin with the raw amino-acid sequence, 360 residues long: Peptide chain release factor 1 (360 aa).

Gln235 is modified (N5-methylglutamine). The tract at residues 285-313 (KRQQAEASTRRNLLGSGDRSDRNRTYNFP) is disordered.

Belongs to the prokaryotic/mitochondrial release factor family. Post-translationally, methylated by PrmC. Methylation increases the termination efficiency of RF1.

The protein resides in the cytoplasm. Functionally, peptide chain release factor 1 directs the termination of translation in response to the peptide chain termination codons UAG and UAA. This Salmonella paratyphi A (strain ATCC 9150 / SARB42) protein is Peptide chain release factor 1.